We begin with the raw amino-acid sequence, 317 residues long: Iron-uptake system-binding protein (317 aa).

A signal peptide spans 1–19; it reads MKKISLTLLILLLALTAAA. A lipid anchor (N-palmitoyl cysteine) is attached at Cys-20. Cys-20 carries the S-diacylglycerol cysteine lipid modification. The Fe/B12 periplasmic-binding domain maps to 57-317; the sequence is IAITGSVESM…KAAAEKLTQN (261 aa).

This sequence belongs to the bacterial solute-binding protein 8 family. As to quaternary structure, the complex is composed of one ATP-binding protein (YusV), two transmembrane proteins (FeuB and FeuC) and a solute-binding protein (FeuA).

It is found in the cell membrane. The protein localises to the cytoplasm. Its subcellular location is the membrane raft. Functionally, involved in the uptake of iron. Its function is as follows. Part of the ABC transporter complex FeuABC/YusV involved in import of the catecholate siderophores bacillibactin and enterobactin. The polypeptide is Iron-uptake system-binding protein (feuA) (Bacillus subtilis (strain 168)).